The primary structure comprises 220 residues: Octanoyltransferase (220 aa).

The BPL/LPL catalytic domain occupies 36–212 (ADSPDQFWLV…CLARQLGRRL (177 aa)). Substrate-binding positions include 75–82 (RGGQVTYH), 142–144 (SLG), and 155–157 (GVA). Cys173 (acyl-thioester intermediate) is an active-site residue.

The protein belongs to the LipB family.

The protein resides in the cytoplasm. The enzyme catalyses octanoyl-[ACP] + L-lysyl-[protein] = N(6)-octanoyl-L-lysyl-[protein] + holo-[ACP] + H(+). Its pathway is protein modification; protein lipoylation via endogenous pathway; protein N(6)-(lipoyl)lysine from octanoyl-[acyl-carrier-protein]: step 1/2. In terms of biological role, catalyzes the transfer of endogenously produced octanoic acid from octanoyl-acyl-carrier-protein onto the lipoyl domains of lipoate-dependent enzymes. Lipoyl-ACP can also act as a substrate although octanoyl-ACP is likely to be the physiological substrate. The sequence is that of Octanoyltransferase from Chromohalobacter salexigens (strain ATCC BAA-138 / DSM 3043 / CIP 106854 / NCIMB 13768 / 1H11).